We begin with the raw amino-acid sequence, 75 residues long: Large ribosomal subunit protein bL31 (75 aa).

Residues Cys16, Cys18, Cys38, and Cys41 each contribute to the Zn(2+) site.

It belongs to the bacterial ribosomal protein bL31 family. Type A subfamily. As to quaternary structure, part of the 50S ribosomal subunit. It depends on Zn(2+) as a cofactor.

Its function is as follows. Binds the 23S rRNA. In Mycolicibacterium smegmatis (strain ATCC 700084 / mc(2)155) (Mycobacterium smegmatis), this protein is Large ribosomal subunit protein bL31.